The chain runs to 268 residues: L-proline trans-4-hydroxylase (268 aa).

Residues H113, D115, and H218 each contribute to the Fe cation site.

It belongs to the PhyH family. Monomer. The cofactor is Fe(2+).

The catalysed reaction is L-proline + 2-oxoglutarate + O2 = trans-4-hydroxy-L-proline + succinate + CO2. It functions in the pathway antibiotic biosynthesis. With respect to regulation, competitively inhibited by pyridine-2,4-dicarboxylate. Inhibited by diethyl pyrocarbonate (DEPC), 3,4-dihydroxybenzoate, pyridine-2,5-dicarboxylate, alpha,alpha'-dipyridyl, and some metal ions such as Co(2+) and Zn(2+). In terms of biological role, involved in the biosynthesis of the peptidolactone antibiotic etamycin (viridogrisein). Catalyzes the hydroxylation of free L-proline at the C-4 position to yield trans-4-hydroxy-L-proline. This chain is L-proline trans-4-hydroxylase, found in Streptomyces griseoviridis.